The sequence spans 1217 residues: MAAGRAQVPSSEQAWLEDAQVFIQKTLCPAVKEPNVQLTPLIIDCVKTVWLSQGRNQGSTLPLSYSFVSVQDLKTHQRLPCCSHLSWSSSAYQAWAQEAGPNGNPLPREQLLLLGTLTDLSADLEQECRNGSLYVRDNTGVLSCELIDLDLSWLGHLFLFPCWSYLPPARWNSSGEGHLELWDAPVPVFPLTVSPGPVTPIPVLYPESASRLLRLRNKLRGVQRNLAGNLVRLSALVKSKQKAYFILSLGRSHPAVTHVSVIVQVPAQLVWHRVLRPGTAYVLTELRVSKIRGQRQHVWMTSQSSRLLLLKPECVQELELELEGPLLEADPKPLPTPSNSEDKKDPEGLARYSRLLSYSGAVTGVLNEPAGLYELDGQLGLCLAYQQFRGLRRVMRPGVCLQLQDVHLLQSVGGGTRRPVLAPCLRGAVLLQSFSRQKPGTHSSRQAYGASLYEQLVWERQLGLPLYLWATKALEELAGKLCPHVLRHHQFLQHSSPGSPSLGLQLLVPTLDLLAPPGSPVRNAHNEILEEPHHCPLQKYTRLQTPSSFPTLAALKEEGQREAWASFDPEALLPLPEASHLPSCQLNRHLAWSWLCLLPSAFHPAQVLLGVLVASSHKGCLQLRDQSGSLPCLLLAKHSQPLSDPRLIGCLVRAERFQLIVERDVRSSFPSWKELSMPGFIQKQQARVYVQFFLADALILPVPRPSLHSATPSTPQTDPTGPEGPHLGQSRLFLLCHKEALMKRNFCVPPGASPEVPKPVLSFCVLGSWLGGTQRKEGTGWGLPEPQGNDDKDQKVHLIFFGSSVRWFEFLHPGQVYRLVAPGPPTPMLFEKDGSSCISRRPLELAGCASCLTVQDNWTLELESSQDIQDVLDANKALPESSLTDLLSDNFTDSLVSFSAEILSRTLCEPLVASLWMKLGNTGTMRRCVKLTVALETAECEFPPHLDVYIEDPHLPPSLGLLPGARVHFSQLEKRVSRSHNVYCCFRSSTYVQVLSFPPETTISIPLPHIYLAELRQGGQSPFQATTSCHIVSVFSLQLFWVCAYCTSICRQGKCTRLGPTCPTQTAVSQAIIRLLVEDGTAEAVVTCRNHHVAAALGLCPREWASLLEFVRVPGRVVLQFAGPGAQLESSARVDKPMTMFLWTLCTSPSVLRPIVLSFELERKPSKIVPLEPPRLQRFQCGELPFLTHVNPRLRLSCLSIRESEYSSSLGILASSC.

The disordered stretch occupies residues 327–346 (LEADPKPLPTPSNSEDKKDP).

The protein belongs to the CTC1 family. As to quaternary structure, component of the CST complex, composed of TEN1/C17orf106, CTC1/C17orf68 and STN1; in the complex interacts directly with STN1. Interacts with ACD and POT1.

It localises to the nucleus. The protein resides in the chromosome. It is found in the telomere. Component of the CST complex proposed to act as a specialized replication factor promoting DNA replication under conditions of replication stress or natural replication barriers such as the telomere duplex. The CST complex binds single-stranded DNA with high affinity in a sequence-independent manner, while isolated subunits bind DNA with low affinity by themselves. Initially the CST complex has been proposed to protect telomeres from DNA degradation. However, the CST complex has been shown to be involved in several aspects of telomere replication. The CST complex inhibits telomerase and is involved in telomere length homeostasis; it is proposed to bind to newly telomerase-synthesized 3' overhangs and to terminate telomerase action implicating the association with the ACD:POT1 complex thus interfering with its telomerase stimulation activity. The CST complex is also proposed to be involved in fill-in synthesis of the telomeric C-strand probably implicating recruitment and activation of DNA polymerase alpha. The CST complex facilitates recovery from many forms of exogenous DNA damage; seems to be involved in the re-initiation of DNA replication at repaired forks and/or dormant origins. Involved in telomere maintenance. Involved in genome stability. May be in involved in telomeric C-strand fill-in during late S/G2 phase. The protein is CST complex subunit CTC1 (CTC1) of Pongo abelii (Sumatran orangutan).